The following is a 190-amino-acid chain: NADH-quinone oxidoreductase subunit B (190 aa).

Residues C67, C68, C132, and C162 each coordinate [4Fe-4S] cluster.

This sequence belongs to the complex I 20 kDa subunit family. NDH-1 is composed of 14 different subunits. Subunits NuoB, C, D, E, F, and G constitute the peripheral sector of the complex. The cofactor is [4Fe-4S] cluster.

It localises to the cell inner membrane. The enzyme catalyses a quinone + NADH + 5 H(+)(in) = a quinol + NAD(+) + 4 H(+)(out). Its function is as follows. NDH-1 shuttles electrons from NADH, via FMN and iron-sulfur (Fe-S) centers, to quinones in the respiratory chain. The immediate electron acceptor for the enzyme in this species is believed to be ubiquinone. Couples the redox reaction to proton translocation (for every two electrons transferred, four hydrogen ions are translocated across the cytoplasmic membrane), and thus conserves the redox energy in a proton gradient. This is NADH-quinone oxidoreductase subunit B from Anaplasma marginale (strain Florida).